The following is a 254-amino-acid chain: 5-oxoprolinase subunit A (254 aa).

This sequence belongs to the LamB/PxpA family. In terms of assembly, forms a complex composed of PxpA, PxpB and PxpC.

It catalyses the reaction 5-oxo-L-proline + ATP + 2 H2O = L-glutamate + ADP + phosphate + H(+). Its function is as follows. Catalyzes the cleavage of 5-oxoproline to form L-glutamate coupled to the hydrolysis of ATP to ADP and inorganic phosphate. The sequence is that of 5-oxoprolinase subunit A from Carboxydothermus hydrogenoformans (strain ATCC BAA-161 / DSM 6008 / Z-2901).